The chain runs to 186 residues: ATP synthase subunit delta (186 aa).

This sequence belongs to the ATPase delta chain family. In terms of assembly, F-type ATPases have 2 components, F(1) - the catalytic core - and F(0) - the membrane proton channel. F(1) has five subunits: alpha(3), beta(3), gamma(1), delta(1), epsilon(1). F(0) has three main subunits: a(1), b(2) and c(10-14). The alpha and beta chains form an alternating ring which encloses part of the gamma chain. F(1) is attached to F(0) by a central stalk formed by the gamma and epsilon chains, while a peripheral stalk is formed by the delta and b chains.

It localises to the cell inner membrane. Functionally, f(1)F(0) ATP synthase produces ATP from ADP in the presence of a proton or sodium gradient. F-type ATPases consist of two structural domains, F(1) containing the extramembraneous catalytic core and F(0) containing the membrane proton channel, linked together by a central stalk and a peripheral stalk. During catalysis, ATP synthesis in the catalytic domain of F(1) is coupled via a rotary mechanism of the central stalk subunits to proton translocation. Its function is as follows. This protein is part of the stalk that links CF(0) to CF(1). It either transmits conformational changes from CF(0) to CF(1) or is implicated in proton conduction. The protein is ATP synthase subunit delta of Fuscovulum blasticum (Rhodobacter blasticus).